The sequence spans 356 residues: S-adenosylmethionine:tRNA ribosyltransferase-isomerase (356 aa).

The protein belongs to the QueA family. In terms of assembly, monomer.

The protein localises to the cytoplasm. The catalysed reaction is 7-aminomethyl-7-carbaguanosine(34) in tRNA + S-adenosyl-L-methionine = epoxyqueuosine(34) in tRNA + adenine + L-methionine + 2 H(+). It participates in tRNA modification; tRNA-queuosine biosynthesis. Transfers and isomerizes the ribose moiety from AdoMet to the 7-aminomethyl group of 7-deazaguanine (preQ1-tRNA) to give epoxyqueuosine (oQ-tRNA). The protein is S-adenosylmethionine:tRNA ribosyltransferase-isomerase of Nitrosospira multiformis (strain ATCC 25196 / NCIMB 11849 / C 71).